An 845-amino-acid polypeptide reads, in one-letter code: Nuclear pore complex protein Nup107 (845 aa).

Disordered regions lie at residues 1–26 (MADS…MPPQ) and 677–702 (QNRP…MASE). Polar residues-rich tracts occupy residues 7–26 (PRSS…MPPQ) and 685–694 (TSHAASSQDN).

The protein belongs to the nucleoporin Nup84/Nup107 family. In terms of assembly, part of the nuclear pore complex (NPC). Expressed in spermatocytes (at protein level).

The protein resides in the nucleus. It localises to the nuclear pore complex. Its subcellular location is the nucleus envelope. The protein localises to the nucleus membrane. It is found in the cytoplasm. The protein resides in the cytoskeleton. It localises to the spindle. Its subcellular location is the chromosome. The protein localises to the nucleus matrix. Plays a role in nuclear pore complex (NPC) assembly and maintenance. Required for nuclear import of Mad. Mediates the association between the nuclear pore complex and a subset of active chromatin regions adjacent to lamin-associated domains. Plays a role in double strand break repair by relocalizing the heterochromatic double strand breaks (DSBs) to the nuclear periphery as part of the homologous recombination (HR) repair process. Regulates cytokinesis during spermatocyte meiosis by maintaining type-B lamin Lam localization to the spindle envelope. Regulates female gonad development and oogenesis. The chain is Nuclear pore complex protein Nup107 from Drosophila melanogaster (Fruit fly).